The following is a 576-amino-acid chain: Gamma-aminobutyric acid receptor subunit beta (576 aa).

The signal sequence occupies residues 1 to 29 (MSDSMLYQTLQTCLPKSRLITLWLAFTLA). Residues 30-268 (MLIQEPRRHA…IQFVRSMGYY (239 aa)) lie on the Extracellular side of the membrane. Asparagine 56 is a glycosylation site (N-linked (GlcNAc...) asparagine). An intrachain disulfide couples cysteine 183 to cysteine 197. N-linked (GlcNAc...) asparagine glycosylation is present at asparagine 251. 3 consecutive transmembrane segments (helical) span residues 269–289 (LIQI…SFWL), 298–320 (VALG…AALP), and 330–350 (VYLG…ATVG). Residues 351–540 (YMAKRIQMRK…TPSDIDKYSR (190 aa)) lie on the Cytoplasmic side of the membrane. 2 disordered regions span residues 372 to 418 (QKKQ…QTVS) and 452 to 507 (HDPK…GDAE). A compositionally biased stretch (basic residues) spans 398–412 (HGHGHGHHSHGHPHV). Residues 475 to 490 (PVGPHGPGPQGPPGGP) are compositionally biased toward pro residues. The span at 491–501 (PAGGGGGGAPP) shows a compositional bias: gly residues. A helical membrane pass occupies residues 541 to 561 (IVFPVCFVCFNLMYWIIYLHV).

This sequence belongs to the ligand-gated ion channel (TC 1.A.9) family. Gamma-aminobutyric acid receptor (TC 1.A.9.5) subfamily. In terms of assembly, homomultimer.

The protein resides in the postsynaptic cell membrane. The protein localises to the cell membrane. Functionally, GABA, an inhibitory neurotransmitter, mediates neuronal inhibition by binding to the GABA receptor and opening an integral chloride channel. In Musca domestica (House fly), this protein is Gamma-aminobutyric acid receptor subunit beta.